The primary structure comprises 165 residues: E3 ubiquitin ligase complex SCF subunit sconC (165 aa).

The tract at residues Ile106–Arg165 is interaction with the F-box domain of F-box proteins.

This sequence belongs to the SKP1 family. Component of the SCF (SKP1-CUL1-F-box protein) E3 ubiquitin ligase complexes.

It participates in protein modification; protein ubiquitination. Its function is as follows. Essential component of the SCF (SKP1-CUL1-F-box protein) E3 ubiquitin ligase complexes, which mediate the ubiquitination and subsequent proteasomal degradation of target proteins. Controls sulfur metabolite repression, probably by mediating the inactivation or degradation of the metR transcription factor. The protein is E3 ubiquitin ligase complex SCF subunit sconC (sconC) of Arthroderma otae (strain ATCC MYA-4605 / CBS 113480) (Microsporum canis).